The sequence spans 796 residues: Striatin-3 (796 aa).

An N-acetylmethionine modification is found at Met-1. A compositionally biased stretch (gly residues) spans 1–13 (MDELAGGGGGGQG). The disordered stretch occupies residues 1 to 60 (MDELAGGGGGGQGMAAPPRPQQGPGGNLSLPPGANGAPGGGGPPAAEAAGPPAGPELSRP). The interval 71–79 (YIQHEWARF) is caveolin-binding. A coiled-coil region spans residues 77–136 (ARFEMERAHWEVERAELQARIAFLQGERKGQENLKKDLVRRIKMLEYALKQERAKYHKLK). Phosphothreonine is present on Thr-150. The interval 166 to 183 (QNSQLTWKQGRQLLRQYL) is calmodulin-binding. Residues Ser-202, Ser-214, Ser-229, Ser-257, and Ser-334 each carry the phosphoserine modification. 2 disordered regions span residues 252–271 (ENAD…IPEG) and 311–335 (EDGE…DLSP). Residues 253 to 264 (NADDSDEEENDM) show a composition bias toward acidic residues. WD repeat units follow at residues 477–516 (SHFD…PAKK), 530–569 (AHIG…VDPY), 583–622 (AHTD…PCVC), 678–717 (QSSN…MIHS), 720–759 (AHLD…CVQE), and 766–795 (KLDE…AKVF).

Belongs to the WD repeat striatin family. As to quaternary structure, tetramerizes. Part of the core of STRIPAK complexes composed of PP2A catalytic and scaffolding subunits, the striatins (PP2A regulatory subunits), the striatin-associated proteins MOB4, STRIP1 and STRIP2, PDCD10 and members of the STE20 kinases, such as STK24 and STK26. The STRIPAK complex can be extended by adapter proteins such as SLMAP:SIKE1 or CTTNBP2NL. Interacts with CDC42BPB. Mainly expressed in the brain and muscles but is also detected at low levels in various tissues such as kidney, spleen and lung.

Its subcellular location is the cytoplasm. The protein localises to the membrane. In terms of biological role, calmodulin-binding scaffolding protein which is the center of the striatin-interacting phosphatase and kinase (STRIPAK) complexes. STRIPAK complexes have critical roles in protein (de)phosphorylation and are regulators of multiple signaling pathways including Hippo, MAPK, nuclear receptor and cytoskeleton remodeling. Different types of STRIPAK complexes are involved in a variety of biological processes such as cell growth, differentiation, apoptosis, metabolism and immune regulation. This chain is Striatin-3 (Strn3), found in Mus musculus (Mouse).